Here is a 409-residue protein sequence, read N- to C-terminus: Forkhead box protein A2 (409 aa).

Positions 150-241 form a DNA-binding region, fork-head; it reads AKPPYSYISL…GNMFENGCYL (92 aa). Residues 250–262 are compositionally biased toward basic and acidic residues; sequence DKKLSKDPSRKTS. Residues 250–315 form a disordered region; that stretch reads DKKLSKDPSR…AASPTSQAQH (66 aa). The span at 263–286 shows a compositional bias: low complexity; sequence EGGSNSSSESCNGNESPHSNSSSN.

It is found in the nucleus. Functionally, may play a crucial role in specification of both the axial mesendoderm and the ventral nervous system. This chain is Forkhead box protein A2 (foxa2), found in Danio rerio (Zebrafish).